The following is a 357-amino-acid chain: D-alanine--D-alanine ligase (357 aa).

The region spanning 134 to 339 is the ATP-grasp domain; that stretch reads KQLFEHRGLP…YPDLIAKLID (206 aa). 167–222 lines the ATP pocket; sequence NDKLTYPVFVKPANLGSSVGISKCNNEEELKSGIAEAFQFDRKLVIEQGINAREIE. D293, E306, and N308 together coordinate Mg(2+).

Belongs to the D-alanine--D-alanine ligase family. Mg(2+) is required as a cofactor. Requires Mn(2+) as cofactor.

It localises to the cytoplasm. The catalysed reaction is 2 D-alanine + ATP = D-alanyl-D-alanine + ADP + phosphate + H(+). It participates in cell wall biogenesis; peptidoglycan biosynthesis. Functionally, cell wall formation. The polypeptide is D-alanine--D-alanine ligase (Staphylococcus epidermidis (strain ATCC 35984 / DSM 28319 / BCRC 17069 / CCUG 31568 / BM 3577 / RP62A)).